A 274-amino-acid polypeptide reads, in one-letter code: Transmembrane protein 106B (274 aa).

Residues 1-11 (MGKSLSHLPLH) are compositionally biased toward low complexity. Residues 1–20 (MGKSLSHLPLHSSKEDAYDG) form a disordered region. The N-myristoyl glycine moiety is linked to residue glycine 2. At 2 to 96 (GKSLSHLPLH…QRLRPRRTKL (95 aa)) the chain is on the cytoplasmic side. The residue at position 33 (serine 33) is a Phosphoserine. A helical transmembrane segment spans residues 97-117 (YVMASVFVCLLLSGLAVFFLF). At 118–274 (PRSIDVKYIG…EYLNVLQPQQ (157 aa)) the chain is on the lumenal side. N-linked (GlcNAc...) asparagine glycosylation is found at asparagine 145, asparagine 151, asparagine 164, and asparagine 183. Cysteine 214 and cysteine 253 are disulfide-bonded. Residue asparagine 256 is glycosylated (N-linked (GlcNAc...) asparagine).

The protein belongs to the TMEM106 family. Can form homomers. Interacts (via N-terminus) with MAP6 (via C-terminus). Interacts (via C-terminus) with the vacuolar-type ATPase subunit ATP6AP1. Interacts (via N-terminus) with AP2M1 and CLTC. Interacts with TMEM106C. As to quaternary structure, (Microbial infection) Interacts with SARS coronavirus-2/SARS-CoV-2 spike protein (via RBD domain). Expressed in the brain, including in the frontal cortex (at protein level). Expressed in lung epithelial cells.

Its subcellular location is the late endosome membrane. The protein resides in the lysosome membrane. The protein localises to the cell membrane. Its function is as follows. In neurons, involved in the transport of late endosomes/lysosomes. May be involved in dendrite morphogenesis and maintenance by regulating lysosomal trafficking. May act as a molecular brake for retrograde transport of late endosomes/lysosomes, possibly via its interaction with MAP6. In motoneurons, may mediate the axonal transport of lysosomes and axonal sorting at the initial segment. It remains unclear whether TMEM106B affects the transport of moving lysosomes in the anterograde or retrograde direction in neurites and whether it is important in the sorting of lysosomes in axons or in dendrites. In neurons, may also play a role in the regulation of lysosomal size and responsiveness to stress. Required for proper lysosomal acidification. In terms of biological role, (Microbial infection) Plays a role in human coronavirus SARS-CoV-2 infection, but not in common cold coronaviruses HCoV-229E and HCoV-OC43 infections. Involved in ACE2-independent SARS-CoV-2 cell entry. Required for post-endocytic stage of virus entry, facilitates spike-mediated membrane fusion. Virus attachment and endocytosis can also be mediated by other cell surface receptors. The sequence is that of Transmembrane protein 106B from Homo sapiens (Human).